A 464-amino-acid chain; its full sequence is tRNA-2-methylthio-N(6)-dimethylallyladenosine synthase (464 aa).

Residues 1 to 25 form a disordered region; it reads MSDLVPLSRKPAPAAGDPAPSPAAP. The region spanning 27–142 is the MTTase N-terminal domain; the sequence is RKVYVHTFGC…LPEMVERARG (116 aa). Residues Cys-36, Cys-72, Cys-105, Cys-180, Cys-184, and Cys-187 each contribute to the [4Fe-4S] cluster site. The Radical SAM core domain maps to 166–398; it reads ARGRATAFVT…LAAQRRIAGE (233 aa). The region spanning 401-464 is the TRAM domain; the sequence is AAELGKVVEV…GGSSLSGTLA (64 aa).

It belongs to the methylthiotransferase family. MiaB subfamily. Monomer. The cofactor is [4Fe-4S] cluster.

The protein resides in the cytoplasm. It carries out the reaction N(6)-dimethylallyladenosine(37) in tRNA + (sulfur carrier)-SH + AH2 + 2 S-adenosyl-L-methionine = 2-methylsulfanyl-N(6)-dimethylallyladenosine(37) in tRNA + (sulfur carrier)-H + 5'-deoxyadenosine + L-methionine + A + S-adenosyl-L-homocysteine + 2 H(+). In terms of biological role, catalyzes the methylthiolation of N6-(dimethylallyl)adenosine (i(6)A), leading to the formation of 2-methylthio-N6-(dimethylallyl)adenosine (ms(2)i(6)A) at position 37 in tRNAs that read codons beginning with uridine. The protein is tRNA-2-methylthio-N(6)-dimethylallyladenosine synthase of Anaeromyxobacter dehalogenans (strain 2CP-C).